Consider the following 476-residue polypeptide: Viral inhibitor of caspase-8-induced apoptosis (476 aa).

The protein belongs to the herpesviridae US22 family. As to quaternary structure, interacts with host pro-caspase-8/CASP8; this interaction inhibits CASP8 activation.

Functionally, plays a role in the inhibition of apoptosis by interacting with the pro-domain of pro-caspase-8/CASP8 and thus preventing its activation. The protein is Viral inhibitor of caspase-8-induced apoptosis (UL36) of Human cytomegalovirus (strain Merlin) (HHV-5).